The chain runs to 66 residues: DNA-directed RNA polymerase subunit Rpo10 (66 aa).

C7, C10, C47, and C48 together coordinate Zn(2+).

Belongs to the archaeal Rpo10/eukaryotic RPB10 RNA polymerase subunit family. Part of the RNA polymerase complex. Requires Zn(2+) as cofactor.

The protein resides in the cytoplasm. The catalysed reaction is RNA(n) + a ribonucleoside 5'-triphosphate = RNA(n+1) + diphosphate. Functionally, DNA-dependent RNA polymerase (RNAP) catalyzes the transcription of DNA into RNA using the four ribonucleoside triphosphates as substrates. This chain is DNA-directed RNA polymerase subunit Rpo10, found in Haloarcula marismortui (strain ATCC 43049 / DSM 3752 / JCM 8966 / VKM B-1809) (Halobacterium marismortui).